The following is a 236-amino-acid chain: Putative glutamine amidotransferase-like protein YvdE (236 aa).

Positions 17-236 (SPFWWNKVSY…IFEIFANGTI (220 aa)) constitute a Glutamine amidotransferase type-1 domain.

The polypeptide is Putative glutamine amidotransferase-like protein YvdE (yvdE) (Lactococcus lactis subsp. lactis (strain IL1403) (Streptococcus lactis)).